Reading from the N-terminus, the 277-residue chain is Phosphate import ATP-binding protein PstB 1 (277 aa).

Residues 27-272 enclose the ABC transporter domain; sequence LRVRDLAVSY…PSHELTAAYI (246 aa). Residue 59 to 66 participates in ATP binding; that stretch reads GPSGCGKT.

This sequence belongs to the ABC transporter superfamily. Phosphate importer (TC 3.A.1.7) family. As to quaternary structure, the complex is composed of two ATP-binding proteins (PstB), two transmembrane proteins (PstC and PstA) and a solute-binding protein (PstS).

Its subcellular location is the cell inner membrane. The enzyme catalyses phosphate(out) + ATP + H2O = ADP + 2 phosphate(in) + H(+). Functionally, part of the ABC transporter complex PstSACB involved in phosphate import. Responsible for energy coupling to the transport system. In Nitrosococcus oceani (strain ATCC 19707 / BCRC 17464 / JCM 30415 / NCIMB 11848 / C-107), this protein is Phosphate import ATP-binding protein PstB 1.